The following is a 308-amino-acid chain: 2-dehydro-3-deoxy-phosphogluconate/2-dehydro-3-deoxy-6-phosphogalactonate aldolase (308 aa).

Substrate contacts are provided by residues 57–58 (TT), 144–146 (YNY), and 169–171 (KDT). The active-site Schiff-base intermediate with substrate is the lysine 169.

The protein belongs to the DapA family. KDPG aldolase subfamily. Homotetramer; dimer of dimers.

It catalyses the reaction 2-dehydro-3-deoxy-6-phospho-D-gluconate = D-glyceraldehyde 3-phosphate + pyruvate. It carries out the reaction 2-dehydro-3-deoxy-6-phospho-D-galactonate = D-glyceraldehyde 3-phosphate + pyruvate. It functions in the pathway carbohydrate acid metabolism; 2-dehydro-3-deoxy-D-gluconate degradation; D-glyceraldehyde 3-phosphate and pyruvate from 2-dehydro-3-deoxy-D-gluconate: step 2/2. In terms of biological role, involved in the degradation of glucose and galactose via the Entner-Doudoroff pathway. Catalyzes the reversible cleavage of 2-keto-3-deoxy-6-phosphogluconate (KDPG) and 2-keto-3-deoxygluconate (KDG) forming pyruvate and glyceraldehyde 3-phosphate or glyceraldehyde, respectively. It is also able to catalyze the reversible cleavage of 2-keto-3-deoxy-6-phosphogalactonate (KDPGal) and 2-keto-3-deoxygalactonate (KDGal). The polypeptide is 2-dehydro-3-deoxy-phosphogluconate/2-dehydro-3-deoxy-6-phosphogalactonate aldolase (eda) (Saccharolobus solfataricus (strain ATCC 35092 / DSM 1617 / JCM 11322 / P2) (Sulfolobus solfataricus)).